Here is a 105-residue protein sequence, read N- to C-terminus: UPF0166 protein aq_450 (105 aa).

This sequence belongs to the UPF0166 family.

The sequence is that of UPF0166 protein aq_450 from Aquifex aeolicus (strain VF5).